The sequence spans 175 residues: Ribulose bisphosphate carboxylase small subunit, chloroplastic (175 aa).

A chloroplast-targeting transit peptide spans 1-46 (MAPSVMASSATTVAPFQGLKSTAGMPVARRSGNSSFGNVSNGGRIR). The segment at 60 to 64 (ETLSY) is interaction with large subunit.

This sequence belongs to the RuBisCO small chain family. In terms of assembly, heterohexadecamer of 8 large and 8 small subunits.

It localises to the plastid. It is found in the chloroplast. Its function is as follows. RuBisCO catalyzes two reactions: the carboxylation of D-ribulose 1,5-bisphosphate, the primary event in carbon dioxide fixation, as well as the oxidative fragmentation of the pentose substrate. Both reactions occur simultaneously and in competition at the same active site. Although the small subunit is not catalytic it is essential for maximal activity. The polypeptide is Ribulose bisphosphate carboxylase small subunit, chloroplastic (Oryza sativa subsp. indica (Rice)).